The primary structure comprises 200 residues: AP-5 complex subunit sigma-1 (200 aa).

As to quaternary structure, probably part of the adaptor protein complex 5 (AP-5) a tetramer composed of AP5B1, AP5M1, AP5S1 and AP5Z1. Interacts with ZFYVE26 and SPG11.

Its subcellular location is the cytoplasm. The protein localises to the cytosol. The protein resides in the late endosome membrane. It is found in the lysosome membrane. In terms of biological role, as part of AP-5, a probable fifth adaptor protein complex it may be involved in endosomal transport. According to PubMed:20613862, it is required for efficient homologous recombination DNA double-strand break repair. In Homo sapiens (Human), this protein is AP-5 complex subunit sigma-1 (AP5S1).